The chain runs to 385 residues: ADP,ATP carrier protein 2, mitochondrial (385 aa).

The N-terminal 74 residues, M1–Q74, are a transit peptide targeting the mitochondrion. 3 Solcar repeats span residues T82–L175, K187–V280, and D288–I374. 5 helical membrane-spanning segments follow: residues F84 to L111, T152 to F176, Y185 to L205, F256 to V277, and F291 to I311. Residues R157 and K169 each coordinate ADP. Residue R315 participates in ADP binding. Residues R315–M320 form an important for transport activity region. The Nucleotide carrier signature motif motif lies at R315 to M320. Residues A351–L371 traverse the membrane as a helical segment.

It belongs to the mitochondrial carrier (TC 2.A.29) family. In terms of assembly, monomer.

The protein localises to the mitochondrion inner membrane. The catalysed reaction is ADP(in) + ATP(out) = ADP(out) + ATP(in). The matrix-open state (m-state) is inhibited by the membrane-permeable bongkrekic acid (BKA). The cytoplasmic-open state (c-state) is inhibited by the membrane-impermeable toxic inhibitor carboxyatractyloside (CATR). Functionally, ADP:ATP antiporter that mediates import of ADP into the mitochondrial matrix for ATP synthesis, and export of ATP out to fuel the cell. Cycles between the cytoplasmic-open state (c-state) and the matrix-open state (m-state): operates by the alternating access mechanism with a single substrate-binding site intermittently exposed to either the cytosolic (c-state) or matrix (m-state) side of the inner mitochondrial membrane. The protein is ADP,ATP carrier protein 2, mitochondrial (AAC2) of Arabidopsis thaliana (Mouse-ear cress).